The following is a 31-amino-acid chain: Photosystem I reaction center subunit XII (31 aa).

The helical transmembrane segment at 7–26 (QVYIALLTALIPAFFALKLG) threads the bilayer.

This sequence belongs to the PsaM family.

The protein localises to the plastid. Its subcellular location is the chloroplast thylakoid membrane. The polypeptide is Photosystem I reaction center subunit XII (Euglena viridis (Cercaria viridis)).